The following is a 293-amino-acid chain: uncharacterized protein (293 aa).

Disordered regions lie at residues 20 to 148 and 226 to 283; these read ELHS…NNNT and RENQ…GNKN. Composition is skewed to acidic residues over residues 37 to 47, 56 to 91, and 99 to 112; these read LEDDEEYDDDQ, EEFDYDNDYNDEEFYDEDDDFKEDDDEEEEEEDDEM, and NIDDDDYEEDEEEQ. 2 stretches are compositionally biased toward low complexity: residues 117–148 and 232–283; these read TNNNNNTTTTTPYTTYNNNNNNDINNNNNNNT and NSNS…GNKN.

This is an uncharacterized protein from Dictyostelium discoideum (Social amoeba).